Consider the following 92-residue polypeptide: Small ribosomal subunit protein uS19 (92 aa).

Belongs to the universal ribosomal protein uS19 family.

Protein S19 forms a complex with S13 that binds strongly to the 16S ribosomal RNA. This is Small ribosomal subunit protein uS19 from Orientia tsutsugamushi (strain Boryong) (Rickettsia tsutsugamushi).